Here is a 225-residue protein sequence, read N- to C-terminus: Uridylate kinase (225 aa).

Position 9 to 10 (9 to 10) interacts with ATP; sequence GS. Glycine 46 provides a ligand contact to UMP. ATP contacts are provided by glycine 47 and arginine 51. UMP contacts are provided by residues aspartate 67 and 115–121; that span reads THPAHTT. Threonine 141, asparagine 142, tyrosine 147, and aspartate 150 together coordinate ATP.

It belongs to the UMP kinase family. Homohexamer.

It is found in the cytoplasm. The catalysed reaction is UMP + ATP = UDP + ADP. It participates in pyrimidine metabolism; CTP biosynthesis via de novo pathway; UDP from UMP (UMPK route): step 1/1. Inhibited by UTP. Its function is as follows. Catalyzes the reversible phosphorylation of UMP to UDP. This is Uridylate kinase from Methanococcus maripaludis (strain C5 / ATCC BAA-1333).